A 382-amino-acid chain; its full sequence is Elloramycin glycosyltransferase ElmGT (382 aa).

The protein belongs to the glycosyltransferase 28 family.

It carries out the reaction 8-demethyltetracenomycin C + dTDP-beta-L-rhamnose = 8-demethyl-8-alpha-L-rhamnosyl-tetracenomycin C + dTDP + H(+). It participates in antibiotic biosynthesis. Functionally, glycosyltransferase that transfers an L-rhamnose moiety from dTDP-L-rhamnose to the elloramycin aglycone 8-demethyl-tetracenomycin C (8DMTC) in elloramycin biosynthesis, an antitumor polyketide. Possesses donor substrate flexibility: able to transfer at least 11 different sugars to 8DMTC, such as NDP-D-glucose, as well as NDP-L-digitoxose, including both L- and D-isomeric forms of some sugars. This chain is Elloramycin glycosyltransferase ElmGT, found in Streptomyces olivaceus.